The following is a 250-amino-acid chain: Eukaryotic translation initiation factor 3 subunit K (250 aa).

The PCI domain occupies 54–235 (YDLFGNLAIL…DVKAGVVKEN (182 aa)).

The protein belongs to the eIF-3 subunit K family. As to quaternary structure, component of the eukaryotic translation initiation factor 3 (eIF-3) complex.

It localises to the cytoplasm. In terms of biological role, component of the eukaryotic translation initiation factor 3 (eIF-3) complex, which is involved in protein synthesis of a specialized repertoire of mRNAs and, together with other initiation factors, stimulates binding of mRNA and methionyl-tRNAi to the 40S ribosome. The eIF-3 complex specifically targets and initiates translation of a subset of mRNAs involved in cell proliferation. This is Eukaryotic translation initiation factor 3 subunit K from Cryptococcus neoformans var. neoformans serotype D (strain B-3501A) (Filobasidiella neoformans).